Reading from the N-terminus, the 994-residue chain is Sarcoplasmic/endoplasmic reticulum calcium ATPase 1 (994 aa).

Residues 1–48 (MEQAHTKTTEECLAYFGVNENTGLSLDQVKKNFDKFGPNELPAEEGKS) lie on the Cytoplasmic side of the membrane. The helical transmembrane segment at 49–69 (LWELVAEQFEDLLVRILLLAA) threads the bilayer. At 70–89 (IISFVLAWFEEGEETVTAFV) the chain is on the lumenal side. The helical transmembrane segment at 90–110 (EPFVILLILIANAVVGVWQER) threads the bilayer. Residues 111-253 (NAEDAIEALK…QEKTPLQQKL (143 aa)) are Cytoplasmic-facing. The chain crosses the membrane as a helical span at residues 254–273 (DEFGEQLSKVISLICVAVWL). Residues 274–295 (INIGHFNDPIHGGSWIKGAIYY) lie on the Lumenal side of the membrane. The helical transmembrane segment at 296 to 313 (FKIAVALAVAAIPEGLPA) threads the bilayer. Residues V304, A305, I307, and E309 each coordinate Ca(2+). At 314–757 (VITTCLALGT…EEGRAIYNNM (444 aa)) the chain is on the cytoplasmic side. The active-site 4-aspartylphosphate intermediate is the D351. 2 residues coordinate Mg(2+): D351 and T353. ATP contacts are provided by T353, E442, R489, K515, R560, T625, G626, D627, R678, and K684. Position 703 (D703) interacts with Mg(2+). N706 lines the ATP pocket. The chain crosses the membrane as a helical span at residues 758–777 (KQFIRYLISSNVGEVVCIFL). Residues N768 and E771 each coordinate Ca(2+). Residues 778–787 (TAALGLPEAL) lie on the Lumenal side of the membrane. A helical membrane pass occupies residues 788 to 808 (IPVQLLWVNLVTDGLPATALG). The tract at residues 788–808 (IPVQLLWVNLVTDGLPATALG) is interaction with PLN. N796, T799, and D800 together coordinate Ca(2+). Over 809–828 (FNPPDLDIMDRPPRSPKEPL) the chain is Cytoplasmic. The chain crosses the membrane as a helical span at residues 829 to 851 (ISGWLFFRYMAIGGYVGAATVGA). At 852–897 (AAWWFMYADDGPNVTFYQLSHFMQCTEDNPDFEGHECEIFESPVPM) the chain is on the lumenal side. C876 and C888 are joined by a disulfide. The helical transmembrane segment at 898–917 (TMALSVLVTIEMCNALNSLS) threads the bilayer. E908 is a binding site for Ca(2+). At 918–930 (ENQSLIRMPPWSN) the chain is on the cytoplasmic side. The helical transmembrane segment at 931–949 (FWLLGSICLSMSLHFLILY) threads the bilayer. An interaction with PLN region spans residues 932 to 943 (WLLGSICLSMSL). Topologically, residues 950–964 (VEPLPMIFKLTPLNV) are lumenal. A helical transmembrane segment spans residues 965–985 (EQWFIVLKMSFPVILLDELLK). Residues 986 to 994 (FVARNYLEG) lie on the Cytoplasmic side of the membrane.

This sequence belongs to the cation transport ATPase (P-type) (TC 3.A.3) family. Type IIA subfamily. Interacts with sarcolipin (SLN). Interacts with phospholamban (PLN). Interacts with myoregulin (MRLN). Interacts with DWORF. Interacts with VMP1. It depends on Mg(2+) as a cofactor.

It is found in the endoplasmic reticulum membrane. The protein resides in the sarcoplasmic reticulum membrane. The enzyme catalyses Ca(2+)(in) + ATP + H2O = Ca(2+)(out) + ADP + phosphate + H(+). Its activity is regulated as follows. Inhibited by sarcolipin (SLN) and myoregulin (MRLN). Also shown to be inhibited by phospholamban (PLN) in vitro. Enhanced by DWORF; DWORF increases activity by displacing sarcolipin (SLN), phospholamban (PLN) and myoregulin (MRLN). Key regulator of striated muscle performance by acting as the major Ca(2+) ATPase responsible for the reuptake of cytosolic Ca(2+) into the sarcoplasmic reticulum. Catalyzes the hydrolysis of ATP coupled with the translocation of calcium from the cytosol to the sarcoplasmic reticulum lumen. Contributes to calcium sequestration involved in muscular excitation/contraction. This Pelophylax lessonae (Pool frog) protein is Sarcoplasmic/endoplasmic reticulum calcium ATPase 1 (ATP2A1).